We begin with the raw amino-acid sequence, 85 residues long: Small muscular protein (85 aa).

Positions 19 to 63 (PMGAFRPGAGQPPRRKESTPGTAEGAPATPEEKKPVPGMKKFPGP) are disordered. The residue at position 36 (Ser-36) is a Phosphoserine. Thr-47 is subject to Phosphothreonine.

It belongs to the SMPX family.

Its function is as follows. Plays a role in the regulatory network through which muscle cells coordinate their structural and functional states during growth, adaptation, and repair. This is Small muscular protein (Smpx) from Rattus norvegicus (Rat).